Here is a 1338-residue protein sequence, read N- to C-terminus: Apoptotic chromatin condensation inducer in the nucleus (1338 aa).

Residues 1–57 form a disordered region; it reads MWGRKRPNSSGETRGILSGNRGVDYGSGRGQSGPFEGRWRKLPKMPEAVGTDPSTSR. The SAP domain occupies 72-106; sequence LQALRVTDLKAALEQRGLAKSGQKSALVKRLKGAL. Residues Ser-132, Ser-166, Ser-169, Ser-208, Ser-210, and Ser-216 each carry the phosphoserine modification. The interval 155–866 is disordered; it reads EAREAAELEE…ATQKKPSISI (712 aa). Residues 161–171 are compositionally biased toward acidic residues; sequence ELEEASAESED. Over residues 219 to 228 the composition is skewed to basic and acidic residues; it reads EKPRKGERRS. Position 242 is a phosphoserine (Ser-242). Phosphothreonine is present on Thr-253. A Glycyl lysine isopeptide (Lys-Gly) (interchain with G-Cter in SUMO1) cross-link involves residue Lys-267. Positions 269-290 are enriched in acidic residues; that stretch reads EEEEEEEEEEEDDDDEEEEEVD. Position 295 is a phosphoserine (Ser-295). The segment covering 313–353 has biased composition (basic and acidic residues); sequence ERTRAKPEKVVDEKPLNIRSQEKGELEKGGRVTRSQEEARR. A Glycyl lysine isopeptide (Lys-Gly) (interchain with G-Cter in SUMO2) cross-link involves residue Lys-318. 2 positions are modified to phosphoserine: Ser-332 and Ser-369. A Glycyl lysine isopeptide (Lys-Gly) (interchain with G-Cter in SUMO2) cross-link involves residue Lys-378. 4 positions are modified to phosphoserine: Ser-387, Ser-389, Ser-391, and Ser-413. Phosphothreonine occurs at positions 417 and 423. A compositionally biased stretch (polar residues) spans 425-434; it reads EASSPPTHIQ. Ser-454, Ser-477, Ser-479, Ser-491, and Ser-497 each carry phosphoserine. Polar residues predominate over residues 506 to 518; sequence QKSSLPECSTQKG. The span at 542-559 shows a compositional bias: basic and acidic residues; it reads ITEEPMKKQSLEQKEGRR. Ser-561 is modified (phosphoserine). Composition is skewed to low complexity over residues 573-603 and 646-662; these read SADS…ASRP and RSAS…GVSR. Lys-654 carries the N6,N6,N6-trimethyllysine; by EHMT2; alternate modification. An N6,N6-dimethyllysine; by EHMT2; alternate modification is found at Lys-654. A phosphoserine mark is found at Ser-655, Ser-657, Ser-710, and Ser-729. Residue Lys-732 forms a Glycyl lysine isopeptide (Lys-Gly) (interchain with G-Cter in SUMO2) linkage. A compositionally biased stretch (polar residues) spans 744 to 754; the sequence is TQPQTSETQIS. Composition is skewed to basic and acidic residues over residues 757–767 and 798–815; these read LESERTHHTVE and NDER…KESS. 2 positions are modified to phosphoserine: Ser-825 and Ser-838. Residues 855–866 are compositionally biased toward polar residues; sequence TAATQKKPSISI. Lys-861 is subject to N6-acetyllysine; alternate. A Glycyl lysine isopeptide (Lys-Gly) (interchain with G-Cter in SUMO2); alternate cross-link involves residue Lys-861. Lys-879 participates in a covalent cross-link: Glycyl lysine isopeptide (Lys-Gly) (interchain with G-Cter in SUMO2). Over residues 892 to 915 the composition is skewed to basic and acidic residues; that stretch reads ADDSRISEDETERNGDDGTHDKGL. Residues 892–950 are disordered; it reads ADDSRISEDETERNGDDGTHDKGLKICRTVTQVVPAEGQENGQREEEEEKEPEAELPAP. Phosphoserine occurs at positions 895 and 898. Residues 936–945 are compositionally biased toward acidic residues; it reads EEEEEKEPEA. Lys-969 is covalently cross-linked (Glycyl lysine isopeptide (Lys-Gly) (interchain with G-Cter in SUMO2)). The residue at position 975 (Thr-975) is a Phosphothreonine. 3 positions are modified to phosphoserine: Ser-986, Ser-989, and Ser-1003. Glycyl lysine isopeptide (Lys-Gly) (interchain with G-Cter in SUMO2) cross-links involve residues Lys-1046 and Lys-1106. Disordered regions lie at residues 1104–1214 and 1226–1338; these read ETKA…DDLF and LPLT…GGRR. Pro residues predominate over residues 1115–1129; sequence PLHPPPPPPVQPPPH. Residues 1130-1174 are compositionally biased toward basic and acidic residues; it reads PRAEQREQERAVREQWAEREREMERRERTRSEREWDRDKVREGPR. The segment covering 1175–1192 has biased composition (basic residues); sequence SRSRSRDRRRKERAKSKE. Ser-1179 carries the phosphoserine; by SRPK2 and PKB/AKT1 modification. Basic and acidic residues-rich tracts occupy residues 1193 to 1214 and 1236 to 1317; these read KKSE…DDLF and KEAE…DRRD. Residues 1209-1236 form a sufficient for interaction with RNPS1 and SAP18 and formation of the ASAP complex region; the sequence is LLDDLFRKTKAAPCIYWLPLTESQIVQK.

Found in a mRNA splicing-dependent exon junction complex (EJC). Component of the heterotrimeric ASAP (apoptosis- and splicing-associated protein) complexes consisting of RNPS1, SAP18 and different isoforms of ACIN1; the association of SAP18 seems to require a preformed RNPS1:ACIN1 complex. Interacts with API5. Interacts with SRPK2 in a phosphorylation-dependent manner. Post-translationally, undergoes proteolytic cleavage; the processed form is active, contrary to the uncleaved form. In terms of processing, phosphorylation on Ser-1179 by SRPK2 up-regulates its stimulatory effect on cyclin A1.

The protein resides in the nucleus. Its subcellular location is the nucleus speckle. It localises to the nucleoplasm. Its function is as follows. Auxiliary component of the splicing-dependent multiprotein exon junction complex (EJC) deposited at splice junction on mRNAs. The EJC is a dynamic structure consisting of core proteins and several peripheral nuclear and cytoplasmic associated factors that join the complex only transiently either during EJC assembly or during subsequent mRNA metabolism. Component of the ASAP complexes which bind RNA in a sequence-independent manner and are proposed to be recruited to the EJC prior to or during the splicing process and to regulate specific excision of introns in specific transcription subsets; ACIN1 confers RNA-binding to the complex. The ASAP complex can inhibit RNA processing during in vitro splicing reactions. The ASAP complex promotes apoptosis and is disassembled after induction of apoptosis. Involved in the splicing modulation of BCL2L1/Bcl-X (and probably other apoptotic genes); specifically inhibits formation of proapoptotic isoforms such as Bcl-X(S); the activity is different from the established EJC assembly and function. Induces apoptotic chromatin condensation after activation by CASP3. Regulates cyclin A1, but not cyclin A2, expression in leukemia cells. This is Apoptotic chromatin condensation inducer in the nucleus (Acin1) from Mus musculus (Mouse).